Reading from the N-terminus, the 168-residue chain is CDP-archaeol synthase (168 aa).

5 consecutive transmembrane segments (helical) span residues 4-24, 51-71, 81-101, 112-132, and 138-158; these read IFEA…PVVL, GFFG…LMFP, VGVA…GSFI, PAVG…AYPL, and GEVL…NVFA.

This sequence belongs to the CDP-archaeol synthase family. Mg(2+) is required as a cofactor.

It localises to the cell membrane. The catalysed reaction is 2,3-bis-O-(geranylgeranyl)-sn-glycerol 1-phosphate + CTP + H(+) = CDP-2,3-bis-O-(geranylgeranyl)-sn-glycerol + diphosphate. It participates in membrane lipid metabolism; glycerophospholipid metabolism. Catalyzes the formation of CDP-2,3-bis-(O-geranylgeranyl)-sn-glycerol (CDP-archaeol) from 2,3-bis-(O-geranylgeranyl)-sn-glycerol 1-phosphate (DGGGP) and CTP. This reaction is the third ether-bond-formation step in the biosynthesis of archaeal membrane lipids. In Pyrococcus abyssi (strain GE5 / Orsay), this protein is CDP-archaeol synthase.